A 255-amino-acid chain; its full sequence is Cytochrome b561 and DOMON domain-containing protein At5g48750 (255 aa).

A signal peptide spans Met1 to Thr27. One can recognise a DOMON domain in the interval Leu54–Gly169. In terms of domain architecture, Cytochrome b561 spans Arg176 to Leu255. The helical transmembrane segment at Ile216 to Ala236 threads the bilayer.

It localises to the membrane. In Arabidopsis thaliana (Mouse-ear cress), this protein is Cytochrome b561 and DOMON domain-containing protein At5g48750.